Reading from the N-terminus, the 231-residue chain is NADH-ubiquinone oxidoreductase chain 4 (231 aa).

Helical transmembrane passes span 1–21 (PIAG…YGMI), 34–54 (MFMP…LTCL), 63–85 (IAYS…TPWG), 89–111 (AMAL…NTTY), 128–148 (ILPM…AIPP), and 156–176 (FLIM…LGLS).

This sequence belongs to the complex I subunit 4 family.

The protein localises to the mitochondrion membrane. The enzyme catalyses a ubiquinone + NADH + 5 H(+)(in) = a ubiquinol + NAD(+) + 4 H(+)(out). In terms of biological role, core subunit of the mitochondrial membrane respiratory chain NADH dehydrogenase (Complex I) that is believed to belong to the minimal assembly required for catalysis. Complex I functions in the transfer of electrons from NADH to the respiratory chain. The immediate electron acceptor for the enzyme is believed to be ubiquinone. This Bothriechis schlegelii (Eyelash palm pitviper) protein is NADH-ubiquinone oxidoreductase chain 4 (MT-ND4).